A 357-amino-acid polypeptide reads, in one-letter code: Sulfate/thiosulfate import ATP-binding protein CysA (357 aa).

In terms of domain architecture, ABC transporter spans 3-237; the sequence is ITIQNLNKHF…PENAFVTEFL (235 aa). 35–42 provides a ligand contact to ATP; that stretch reads GPSGCGKT.

This sequence belongs to the ABC transporter superfamily. Sulfate/tungstate importer (TC 3.A.1.6) family. In terms of assembly, the complex is composed of two ATP-binding proteins (CysA), two transmembrane proteins (CysT and CysW) and a solute-binding protein (CysP).

Its subcellular location is the cell inner membrane. The enzyme catalyses sulfate(out) + ATP + H2O = sulfate(in) + ADP + phosphate + H(+). It carries out the reaction thiosulfate(out) + ATP + H2O = thiosulfate(in) + ADP + phosphate + H(+). Its function is as follows. Part of the ABC transporter complex CysAWTP involved in sulfate/thiosulfate import. Responsible for energy coupling to the transport system. This chain is Sulfate/thiosulfate import ATP-binding protein CysA, found in Neisseria meningitidis serogroup A / serotype 4A (strain DSM 15465 / Z2491).